Consider the following 267-residue polypeptide: Collectin-11 (267 aa).

Residues 1 to 21 (MKRALALMGLAFLCVLRAGAA) form the signal peptide. The tract at residues 40-109 (GDAGEKGDKG…GPNGEPGIPC (70 aa)) is disordered. Composition is skewed to basic and acidic residues over residues 41 to 50 (DAGEKGDKGA) and 62 to 71 (EKGDVGDKGQ). Residues 49–108 (GAPGRPGRVGPTGEKGDVGDKGQKGGVGRHGKIGPIGSKGEKGDSGDIGPPGPNGEPGIP) form the Collagen-like domain. The stretch at 110–144 (ECSQLRKAIGEMDNQVTQLTAELKFIKNAVAGVRE) forms a coiled coil. The 117-residue stretch at 145 to 261 (TEQKMYLLVK…CHLTMHFLCE (117 aa)) folds into the C-type lectin domain. Disulfide bonds link Cys-166-Cys-260 and Cys-238-Cys-252. Arg-196 lines the a carbohydrate pocket. Asp-203, Glu-207, Glu-228, Asn-230, Asn-231, Asp-234, Glu-236, and Asp-237 together coordinate Ca(2+). A carbohydrate is bound at residue Glu-236. A carbohydrate is bound by residues Glu-240 and 248-250 (NDV). 2 residues coordinate Ca(2+): Asn-248 and Asp-249.

This sequence belongs to the COLEC10/COLEC11 family. Homotrimer; disulfide-linked. Interacts with MASP1; probably triggers the lectin pathway of complement.

It localises to the secreted. In terms of biological role, lectin that plays a role in innate immunity, apoptosis and embryogenesis. Calcium-dependent lectin that binds self and non-self glycoproteins presenting high mannose oligosaccharides with at least one terminal alpha-1,2-linked mannose epitope. Primarily recognizes the terminal disaccharide of the glycan. Also recognizes a subset of fucosylated glycans and lipopolysaccharides. Plays a role in innate immunity through its ability to bind non-self sugars presented by microorganisms and to activate the complement through the recruitment of MAPS1. Also plays a role in apoptosis through its ability to bind in a calcium-independent manner the DNA present at the surface of apoptotic cells and to activate the complement in response to this binding. Finally, plays a role in development, probably serving as a guidance cue during the migration of neural crest cells and other cell types during embryogenesis. The chain is Collectin-11 (COLEC11) from Bos taurus (Bovine).